A 417-amino-acid polypeptide reads, in one-letter code: Serine--tRNA ligase (417 aa).

225-227 (TLE) is an L-serine binding site. 256 to 258 (RQE) provides a ligand contact to ATP. Glu-279 is an L-serine binding site. 343-346 (EVSS) contributes to the ATP binding site. L-serine is bound at residue Thr-379.

This sequence belongs to the class-II aminoacyl-tRNA synthetase family. Type-1 seryl-tRNA synthetase subfamily. In terms of assembly, homodimer. The tRNA molecule binds across the dimer.

Its subcellular location is the cytoplasm. The catalysed reaction is tRNA(Ser) + L-serine + ATP = L-seryl-tRNA(Ser) + AMP + diphosphate + H(+). It catalyses the reaction tRNA(Sec) + L-serine + ATP = L-seryl-tRNA(Sec) + AMP + diphosphate + H(+). It participates in aminoacyl-tRNA biosynthesis; selenocysteinyl-tRNA(Sec) biosynthesis; L-seryl-tRNA(Sec) from L-serine and tRNA(Sec): step 1/1. Catalyzes the attachment of serine to tRNA(Ser). Is also able to aminoacylate tRNA(Sec) with serine, to form the misacylated tRNA L-seryl-tRNA(Sec), which will be further converted into selenocysteinyl-tRNA(Sec). The polypeptide is Serine--tRNA ligase (Mycoplasma genitalium (strain ATCC 33530 / DSM 19775 / NCTC 10195 / G37) (Mycoplasmoides genitalium)).